A 323-amino-acid polypeptide reads, in one-letter code: tRNA dimethylallyltransferase (323 aa).

12–19 (GPTAAGKT) is a binding site for ATP. Position 14-19 (14-19 (TAAGKT)) interacts with substrate. Interaction with substrate tRNA stretches follow at residues 37–40 (DSAL) and 161–165 (QRLMR).

It belongs to the IPP transferase family. As to quaternary structure, monomer. It depends on Mg(2+) as a cofactor.

It carries out the reaction adenosine(37) in tRNA + dimethylallyl diphosphate = N(6)-dimethylallyladenosine(37) in tRNA + diphosphate. Catalyzes the transfer of a dimethylallyl group onto the adenine at position 37 in tRNAs that read codons beginning with uridine, leading to the formation of N6-(dimethylallyl)adenosine (i(6)A). This chain is tRNA dimethylallyltransferase, found in Pseudomonas aeruginosa (strain LESB58).